A 190-amino-acid polypeptide reads, in one-letter code: dCTP deaminase, dUMP-forming (190 aa).

DCTP contacts are provided by residues 101-106 (KSSLGR), Asp119, 127-129 (TLE), Gln148, Tyr162, and Gln174. Glu129 serves as the catalytic Proton donor/acceptor. Positions 161 to 190 (PYGSSSVGSKYQGQRGPTPSRSYQNFVKND) are disordered. Over residues 163 to 190 (GSSSVGSKYQGQRGPTPSRSYQNFVKND) the composition is skewed to polar residues.

Belongs to the dCTP deaminase family. As to quaternary structure, homotrimer.

The enzyme catalyses dCTP + 2 H2O = dUMP + NH4(+) + diphosphate. It participates in pyrimidine metabolism; dUMP biosynthesis; dUMP from dCTP: step 1/1. Functionally, bifunctional enzyme that catalyzes both the deamination of dCTP to dUTP and the hydrolysis of dUTP to dUMP without releasing the toxic dUTP intermediate. This Mycolicibacterium vanbaalenii (strain DSM 7251 / JCM 13017 / BCRC 16820 / KCTC 9966 / NRRL B-24157 / PYR-1) (Mycobacterium vanbaalenii) protein is dCTP deaminase, dUMP-forming.